The following is a 131-amino-acid chain: Small ribosomal subunit protein uS8 (131 aa).

It belongs to the universal ribosomal protein uS8 family. Part of the 30S ribosomal subunit. Contacts proteins S5 and S12.

One of the primary rRNA binding proteins, it binds directly to 16S rRNA central domain where it helps coordinate assembly of the platform of the 30S subunit. The sequence is that of Small ribosomal subunit protein uS8 from Campylobacter jejuni subsp. jejuni serotype O:23/36 (strain 81-176).